The chain runs to 406 residues: Serine/threonine transporter SstT (406 aa).

9 helical membrane-spanning segments follow: residues 11–31 (IGLVPLIIVGLVLGILIGWLM), 45–65 (FVGALKAVAPILVFILVMAAI), 79–99 (VLIMYIFGTFLAALTAVVASF), 141–161 (AIANANYMGILAWALIIGLAL), 185–205 (FVIAFAPIGILGLVANTIAET), 216–236 (LLTILVGCMLFIALVVNPIIV), 298–318 (MAGAAITINVLTLAAAHTLGV), 330–350 (VVATVAACGASGVAGGSLLLI), and 357–377 (FNIPNDIAMQVVAIGFIIGVV).

The protein belongs to the dicarboxylate/amino acid:cation symporter (DAACS) (TC 2.A.23) family.

It is found in the cell inner membrane. The catalysed reaction is L-serine(in) + Na(+)(in) = L-serine(out) + Na(+)(out). It catalyses the reaction L-threonine(in) + Na(+)(in) = L-threonine(out) + Na(+)(out). Its function is as follows. Involved in the import of serine and threonine into the cell, with the concomitant import of sodium (symport system). The chain is Serine/threonine transporter SstT from Psychrobacter sp. (strain PRwf-1).